The primary structure comprises 320 residues: 33 kDa chaperonin (320 aa).

Positions 1–17 (MTDASGSERLKRTKDIS) are enriched in basic and acidic residues. Residues 1–27 (MTDASGSERLKRTKDISESTPPSSLPD) form a disordered region. Intrachain disulfides connect Cys-262-Cys-264 and Cys-295-Cys-298.

The protein belongs to the HSP33 family. Post-translationally, under oxidizing conditions two disulfide bonds are formed involving the reactive cysteines. Under reducing conditions zinc is bound to the reactive cysteines and the protein is inactive.

The protein resides in the cytoplasm. Its function is as follows. Redox regulated molecular chaperone. Protects both thermally unfolding and oxidatively damaged proteins from irreversible aggregation. Plays an important role in the bacterial defense system toward oxidative stress. The polypeptide is 33 kDa chaperonin (Synechococcus sp. (strain JA-3-3Ab) (Cyanobacteria bacterium Yellowstone A-Prime)).